Here is a 765-residue protein sequence, read N- to C-terminus: Periplasmic beta-glucosidase (765 aa).

The N-terminal stretch at 1 to 20 (MKWLCSVGIAVSLALQPALA) is a signal peptide. Residue D287 is part of the active site.

The protein belongs to the glycosyl hydrolase 3 family.

Its subcellular location is the periplasm. The catalysed reaction is Hydrolysis of terminal, non-reducing beta-D-glucosyl residues with release of beta-D-glucose.. The protein is Periplasmic beta-glucosidase (bglX) of Escherichia coli (strain K12).